The following is a 379-amino-acid chain: MADKRDYYEVLGVDKNASDAELKKAYRNLAKKYHPDVNPGDTTAEAKFKEVNEAYEILSDSQKRSRYDQFGHAGTDPNGFGGAGGFSTDFDFGGIGDIFETFFGGSGFGGRSKTRRGPQKGADIKYSTEISFEEAAFGVEREINVSKMEVCSKCTGSGAKPGSNVTTCNHCNGTGQVQIKQNTPFGQFINTKTCDACKGEGKIITEPCPACNGKGRLRSTKKIKIDIPAGIDDGQTISLRGGGDPGVKGGPNGDLYVNIRVKPHPLFTRQGNNVVCEVPITFTQAALGAELEVPTLDGKVKYTVPEGTQTGSVFRLKGKGIPYLRGNGRGDQYVKVNIEVPKKLNDKQKALLREFAEISGDDSHEQRKGFFDKMKDAFK.

A J domain is found at 6–71 (DYYEVLGVDK…QKRSRYDQFG (66 aa)). The CR-type zinc-finger motif lies at 138 to 220 (GVEREINVSK…CNGKGRLRST (83 aa)). Zn(2+) is bound by residues Cys151, Cys154, Cys168, Cys171, Cys194, Cys197, Cys208, and Cys211. 4 CXXCXGXG motif repeats span residues 151-158 (CSKCTGSG), 168-175 (CNHCNGTG), 194-201 (CDACKGEG), and 208-215 (CPACNGKG).

The protein belongs to the DnaJ family. Homodimer. Requires Zn(2+) as cofactor.

It localises to the cytoplasm. Participates actively in the response to hyperosmotic and heat shock by preventing the aggregation of stress-denatured proteins and by disaggregating proteins, also in an autonomous, DnaK-independent fashion. Unfolded proteins bind initially to DnaJ; upon interaction with the DnaJ-bound protein, DnaK hydrolyzes its bound ATP, resulting in the formation of a stable complex. GrpE releases ADP from DnaK; ATP binding to DnaK triggers the release of the substrate protein, thus completing the reaction cycle. Several rounds of ATP-dependent interactions between DnaJ, DnaK and GrpE are required for fully efficient folding. Also involved, together with DnaK and GrpE, in the DNA replication of plasmids through activation of initiation proteins. In Ruminiclostridium cellulolyticum (strain ATCC 35319 / DSM 5812 / JCM 6584 / H10) (Clostridium cellulolyticum), this protein is Chaperone protein DnaJ.